Consider the following 874-residue polypeptide: MDIGKRYMPHELENKWYKLWEENHSFEPKPGNGKFSIVIPPPNITGRIHIGHALNIVLQDISVRYNRMKGKETVWIPGEDHAGIATQHVVEKYLLKEEGKRREDYTREEFLKITWDWANKYRNHIREQIKALAASVDWSRERFTLDEGLNQAVRKVFVSLYNEGLIYKGKYIVNWCPSCGTVLADDEVEHSEEKGKLWYIKYPLENTQNYVTVATTRPETMLGDTALAVNPSDERYKNLIGETAILPIVGRKLKIIADPYVDTNFGTGVVKVTPAHDPNDYQIGLRHDLERIQIIDENARINENGGKYAGLDRYIARERIVEDLKKEGLLEKEEDYTHSVGHCYRCDTVIEPLLLDQWFVKMKPLAEKAIQVVENDEIKFYPERWKKVYLNWMYEIRDWCISRQLWWGHRIPVWYCQNCGHVNVSVEDVKKCEKCGSTDLKQDEDVLDTWFSSALWPFSTLGWPEETEDLKKYYPTDLLVTGFDIIFFWVARMIMMGEKFMGEKPFHDVYLHQLVRDKYGRKMSKSLGNGVDPLEVINEYGTDPVRFTLSVLAAQGRDIKLDVGSFDAYRKFANKIWNAARFVLLNMEDYEKTVLKDEDLKIEDKWILTRLNSTILEISKDLEVYNYDQAARKLYDFFWNELCDWYIEASKNRLNSIGKDKLVVQNVILQVFDSSLRLLHPFMPYISEELWQKLPIEKDSELLISAKWPEYNESNIYPEAEKVFSKVMELVSGIRNVKAEMDIPQTQEVDVKYKIVAKNDDFIEKNKNLIEHLAFLINITQTEVKPAKSATAYVDESVEVYIPLGDYIDIDTEKQRLTKKLEKLSKDIELYNKKLSNKNFVEKADPDVVEKTKEDLIESEKKYQKLQALLKEIS.

A 'HIGH' region motif is present at residues 42–52 (PNITGRIHIGH). The 'KMSKS' region motif lies at 522–526 (KMSKS). Position 525 (K525) interacts with ATP. A coiled-coil region spans residues 806–874 (DYIDIDTEKQ…KLQALLKEIS (69 aa)).

This sequence belongs to the class-I aminoacyl-tRNA synthetase family. ValS type 1 subfamily. Monomer.

It localises to the cytoplasm. It carries out the reaction tRNA(Val) + L-valine + ATP = L-valyl-tRNA(Val) + AMP + diphosphate. Catalyzes the attachment of valine to tRNA(Val). As ValRS can inadvertently accommodate and process structurally similar amino acids such as threonine, to avoid such errors, it has a 'posttransfer' editing activity that hydrolyzes mischarged Thr-tRNA(Val) in a tRNA-dependent manner. The polypeptide is Valine--tRNA ligase (Petrotoga mobilis (strain DSM 10674 / SJ95)).